A 215-amino-acid chain; its full sequence is Adenylate kinase (215 aa).

Position 10 to 15 (10 to 15 (GAGKGT)) interacts with ATP. The NMP stretch occupies residues 30-59 (STGDMLRAAVKAGSPLGQQVKGVMDSGGLV). AMP-binding positions include threonine 31, arginine 36, 57 to 59 (GLV), 85 to 88 (GFPR), and glutamine 92. The interval 122 to 159 (GRRVHPASGRVYHTEHNPPKVAGKDDVTGEDLIQREDD) is LID. ATP contacts are provided by residues arginine 123 and 132–133 (VY). Arginine 156 and arginine 167 together coordinate AMP. Glycine 201 lines the ATP pocket.

Belongs to the adenylate kinase family. Monomer.

It localises to the cytoplasm. The catalysed reaction is AMP + ATP = 2 ADP. The protein operates within purine metabolism; AMP biosynthesis via salvage pathway; AMP from ADP: step 1/1. Catalyzes the reversible transfer of the terminal phosphate group between ATP and AMP. Plays an important role in cellular energy homeostasis and in adenine nucleotide metabolism. This chain is Adenylate kinase, found in Pseudomonas paraeruginosa (strain DSM 24068 / PA7) (Pseudomonas aeruginosa (strain PA7)).